Reading from the N-terminus, the 272-residue chain is Large ribosomal subunit protein uL2 (272 aa).

The interval 222-272 (GTAMNPVDHPHGGGEGRNFGKHPVSPWGKKTKGKKTRNNRLTDKFIVHRRS) is disordered. The segment covering 250 to 259 (KKTKGKKTRN) has biased composition (basic residues). Positions 261–272 (RLTDKFIVHRRS) are enriched in basic and acidic residues.

Belongs to the universal ribosomal protein uL2 family. Part of the 50S ribosomal subunit. Forms a bridge to the 30S subunit in the 70S ribosome.

Functionally, one of the primary rRNA binding proteins. Required for association of the 30S and 50S subunits to form the 70S ribosome, for tRNA binding and peptide bond formation. It has been suggested to have peptidyltransferase activity; this is somewhat controversial. Makes several contacts with the 16S rRNA in the 70S ribosome. This Baumannia cicadellinicola subsp. Homalodisca coagulata protein is Large ribosomal subunit protein uL2.